We begin with the raw amino-acid sequence, 286 residues long: Tungstate-binding protein TupA (286 aa).

A signal peptide spans 1–20 (MKRLLSIITAVMMLALALTG). Cys-21 is lipidated: N-palmitoyl cysteine. Residue Cys-21 is the site of S-diacylglycerol cysteine attachment.

As to quaternary structure, monomer. The complex is composed of two ATP-binding proteins (TupC), two transmembrane proteins (TupB) and a solute-binding protein (TupA).

It is found in the cell membrane. Part of an ABC transporter complex involved in tungstate uptake. Specifically binds tungstate. The sequence is that of Tungstate-binding protein TupA from Peptoclostridium acidaminophilum (Eubacterium acidaminophilum).